A 543-amino-acid chain; its full sequence is Ipecoside beta-D-glucosidase IpeGLU1 (543 aa).

A beta-D-glucoside is bound by residues Q36, H140, 185-186, Y350, E422, W471, and F487; that span reads NE. E186 (proton donor) is an active-site residue. The active-site Nucleophile is E422.

It belongs to the glycosyl hydrolase 1 family. In terms of tissue distribution, expressed in roots.

It localises to the cytoplasm. The protein resides in the cytosol. The catalysed reaction is deacetylipecoside + H2O = deacetylipecoside aglycone + D-glucose. It carries out the reaction deacetylisoipecoside + H2O = deacetylisoipecoside aglycone + D-glucose. It catalyses the reaction 6-O-methyldeacetylipecoside + H2O = 6-O-methyldeacetylipecoside aglycone + D-glucose. The enzyme catalyses 6-O-methyldeacetylisoipecoside + H2O = 6-O-methyldeacetylisoipecoside aglycone + D-glucose. The catalysed reaction is ipecoside + H2O = ipecoside aglycone + D-glucose. It carries out the reaction 3alpha(S)-strictosidine + H2O = strictosidine aglycone + D-glucose. Its pathway is alkaloid biosynthesis. With respect to regulation, inhibited by Cu(2+), Fe(2+) and Zn(2+). Functionally, beta-glucosidase involved in the biosynthesis of ipecac and benzylisoquinoline monoterpenoid-isoquinoline alkaloids natural products, starting by the condensation of dopamine and secologanin, and including emetine and cephaeline, drugs used both as anti-protozoal (e.g. treatment of ameobiasis) and as emetic agents. In response to pathogen and herbivore attack, triggers the release of toxic ipecoside aglycon to trigger defense responses. Catalyzes deglucosylation both on (1S)-diastereomer and (1R)-diastereomer substrates, including ipecoside, the main alkaloidal glucoside. Also active on N-deacetylisoipecoside, 6-O-methyl-N-deacetylisoipecoside, 6-O-methyl-N-deacetylipecoside and N-deacetylipecoside. The polypeptide is Ipecoside beta-D-glucosidase IpeGLU1 (Carapichea ipecacuanha (Ipecac)).